The primary structure comprises 481 residues: Beta-amyrin 28-monooxygenase (481 aa).

The helical transmembrane segment at 4–24 (FYVPLLSLFVLFISLSFHFLF) threads the bilayer. Cysteine 428 contacts heme.

This sequence belongs to the cytochrome P450 family. It depends on heme as a cofactor. As to expression, mostly expressed in roots, and, to a lower extent, in stems and leaves. Accumulates only in the rhizome of plants.

It localises to the membrane. The catalysed reaction is beta-amyrin + 3 reduced [NADPH--hemoprotein reductase] + 3 O2 = oleanolate + 3 oxidized [NADPH--hemoprotein reductase] + 4 H2O + 4 H(+). Its pathway is secondary metabolite biosynthesis; terpenoid biosynthesis. Functionally, component of the oleanane-type triterpene saponins (e.g. ginsenosides or panaxosides) biosynthetic pathway. Catalyzes the carboxylation of beta-amyrin at the C-28 position to form oleanolic acid during ginsenoside biosynthesis, a class of tetracyclic triterpenoid saponins. This chain is Beta-amyrin 28-monooxygenase, found in Panax ginseng (Korean ginseng).